The chain runs to 303 residues: Aspartate carbamoyltransferase catalytic subunit (303 aa).

Carbamoyl phosphate contacts are provided by arginine 51 and threonine 52. Lysine 80 contributes to the L-aspartate binding site. Carbamoyl phosphate-binding residues include arginine 101, histidine 129, and glutamine 132. Residues arginine 162 and arginine 221 each contribute to the L-aspartate site. Carbamoyl phosphate is bound by residues leucine 260 and proline 261.

This sequence belongs to the aspartate/ornithine carbamoyltransferase superfamily. ATCase family. In terms of assembly, heterooligomer of catalytic and regulatory chains.

It carries out the reaction carbamoyl phosphate + L-aspartate = N-carbamoyl-L-aspartate + phosphate + H(+). It participates in pyrimidine metabolism; UMP biosynthesis via de novo pathway; (S)-dihydroorotate from bicarbonate: step 2/3. Functionally, catalyzes the condensation of carbamoyl phosphate and aspartate to form carbamoyl aspartate and inorganic phosphate, the committed step in the de novo pyrimidine nucleotide biosynthesis pathway. The polypeptide is Aspartate carbamoyltransferase catalytic subunit (Saccharolobus islandicus (strain Y.N.15.51 / Yellowstone #2) (Sulfolobus islandicus)).